A 391-amino-acid chain; its full sequence is Pyruvate dehydrogenase E1 component subunit alpha, testis-specific form, mitochondrial (391 aa).

A mitochondrion-targeting transit peptide spans M1 to K30. Pyruvate contacts are provided by H93, Y119, R120, A158, G166, V168, D197, G198, A199, N226, and Y228. Residues Y119 and R120 each contribute to the thiamine diphosphate site. Thiamine diphosphate-binding residues include G166, V168, D197, G198, A199, and N226. Mg(2+) is bound at residue D197. Positions 226 and 228 each coordinate Mg(2+). H293 is a binding site for thiamine diphosphate. 2 positions are modified to phosphoserine: S294 and S296. The residue at position 301 (S301) is a Phosphoserine; by PDK3.

Heterotetramer of two PDHA2 and two PDHB subunits. The heterotetramer interacts with DLAT, and is part of the multimeric pyruvate dehydrogenase complex that contains multiple copies of pyruvate dehydrogenase (E1), dihydrolipoamide acetyltransferase (DLAT, E2) and lipoamide dehydrogenase (DLD, E3). These subunits are bound to an inner core composed of about 48 DLAT and 12 PDHX molecules. Thiamine diphosphate serves as cofactor. It depends on Mg(2+) as a cofactor. Testis.

Its subcellular location is the mitochondrion matrix. The catalysed reaction is N(6)-[(R)-lipoyl]-L-lysyl-[protein] + pyruvate + H(+) = N(6)-[(R)-S(8)-acetyldihydrolipoyl]-L-lysyl-[protein] + CO2. With respect to regulation, pyruvate dehydrogenase activity is inhibited by phosphorylation of PDHA2; it is reactivated by dephosphorylation. Its function is as follows. The pyruvate dehydrogenase complex catalyzes the overall conversion of pyruvate to acetyl-CoA and CO(2), and thereby links the glycolytic pathway to the tricarboxylic cycle. The sequence is that of Pyruvate dehydrogenase E1 component subunit alpha, testis-specific form, mitochondrial (Pdha2) from Rattus norvegicus (Rat).